We begin with the raw amino-acid sequence, 972 residues long: Leucine--tRNA ligase (972 aa).

Positions 78-89 (PYPSGDGLHVGH) match the 'HIGH' region motif. Residues 741–745 (KIGKS) carry the 'KMSKS' region motif. Lys744 is a binding site for ATP.

It belongs to the class-I aminoacyl-tRNA synthetase family.

It is found in the cytoplasm. It carries out the reaction tRNA(Leu) + L-leucine + ATP = L-leucyl-tRNA(Leu) + AMP + diphosphate. This is Leucine--tRNA ligase from Mycobacterium leprae (strain Br4923).